A 283-amino-acid polypeptide reads, in one-letter code: ATP phosphoribosyltransferase (283 aa).

This sequence belongs to the ATP phosphoribosyltransferase family. Long subfamily. Mg(2+) serves as cofactor.

It is found in the cytoplasm. The catalysed reaction is 1-(5-phospho-beta-D-ribosyl)-ATP + diphosphate = 5-phospho-alpha-D-ribose 1-diphosphate + ATP. Its pathway is amino-acid biosynthesis; L-histidine biosynthesis; L-histidine from 5-phospho-alpha-D-ribose 1-diphosphate: step 1/9. Feedback inhibited by histidine. Functionally, catalyzes the condensation of ATP and 5-phosphoribose 1-diphosphate to form N'-(5'-phosphoribosyl)-ATP (PR-ATP). Has a crucial role in the pathway because the rate of histidine biosynthesis seems to be controlled primarily by regulation of HisG enzymatic activity. This Methanopyrus kandleri (strain AV19 / DSM 6324 / JCM 9639 / NBRC 100938) protein is ATP phosphoribosyltransferase.